We begin with the raw amino-acid sequence, 432 residues long: Solute carrier family 38 member 8 (432 aa).

The next 11 membrane-spanning stretches (helical) occupy residues 29–49, 59–79, 103–123, 144–164, 175–195, 215–237, 253–273, 292–312, 345–365, 368–388, and 409–429; these read AVFI…PWAF, FLVA…LGYA, LCEI…LRVI, AAQN…LSAL, ILGT…YYLW, VFSV…SIYC, LSLL…FLTF, IIVA…IVLF, LPLT…LPDL, IISI…GLCL, and GILS…VAMV.

Belongs to the amino acid/polyamine transporter 2 family. As to expression, expressed in neurons located in the gray matter. Highly expressed in thalamus, hypothalamus, amygdala and pons. Expressed in the CA3 area of hippocampus and in the Purkinje layer of the cerebellum (at protein level). Expressed in the eye.

It is found in the membrane. Its subcellular location is the cytoplasm. It localises to the cell cortex. The protein localises to the cell projection. The protein resides in the axon. The enzyme catalyses L-glutamine(out) = L-glutamine(in). The catalysed reaction is L-alanine(in) = L-alanine(out). It catalyses the reaction L-histidine(out) = L-histidine(in). It carries out the reaction L-aspartate(out) = L-aspartate(in). The enzyme catalyses L-arginine(in) = L-arginine(out). The catalysed reaction is L-leucine(in) = L-leucine(out). Functionally, electrogenic sodium-dependent amino acid transporter with a preference for L-glutamine, L-alanine, L-histidine, L-aspartate and L-arginine. May facilitate glutamine uptake in both excitatory and inhibitory neurons. The transport mechanism and stoichiometry remain to be elucidated. The polypeptide is Solute carrier family 38 member 8 (Mus musculus (Mouse)).